A 182-amino-acid chain; its full sequence is MKEQEIQSSMNKSVEATQRNFNTIRTGRANASLLDRISVEYYGAETPIKSLASISTIDSQTISIQPFDISSLQTIEKAISVSDLGITPNNDGKVIRINVPPLTEERRKEFCKLASKYAEEGKVALRNIRRDAVDKEKKDEKEGLISKDVSRDNQLEIQKFTDKYISLIETKLSEKEKEILKV.

It belongs to the RRF family.

The protein localises to the cytoplasm. Functionally, responsible for the release of ribosomes from messenger RNA at the termination of protein biosynthesis. May increase the efficiency of translation by recycling ribosomes from one round of translation to another. In Prochlorococcus marinus subsp. pastoris (strain CCMP1986 / NIES-2087 / MED4), this protein is Ribosome-recycling factor.